Here is a 474-residue protein sequence, read N- to C-terminus: Melanopsin (474 aa).

Over 1–72 the chain is Extracellular; the sequence is MNSPSESRVP…VDVPDHAHYT (72 aa). Asn-31 and Asn-35 each carry an N-linked (GlcNAc...) asparagine glycan. The chain crosses the membrane as a helical span at residues 73-93; the sequence is LGTVILLVGLTGMLGNLTVIY. The Cytoplasmic segment spans residues 94–107; sequence TFCRNRGLRTPANM. The chain crosses the membrane as a helical span at residues 108–128; the sequence is LIINLAVSDFLMSFTQAPVFF. At 129–144 the chain is on the extracellular side; the sequence is ASSLYKKWLFGETGCK. Cysteines 143 and 221 form a disulfide. Residues 145–165 form a helical membrane-spanning segment; sequence FYAFCGAVFGIVSMITLTAIA. Residues 166–188 lie on the Cytoplasmic side of the membrane; it reads MDRYLVITRPLATIGMRSKRRTA. The chain crosses the membrane as a helical span at residues 189 to 209; the sequence is LVLLGVWLYALAWSLPPFFGW. The Extracellular portion of the chain corresponds to 210–238; that stretch reads SAYVPEGLLTSCSWDYVTFTPLVRAYTML. Residues 239–259 traverse the membrane as a helical segment; that stretch reads LFCFVFFLPLLIIIFCYIFIF. At 260-293 the chain is on the cytoplasmic side; that stretch reads RAIRETGRACEGCGESPLRRRQWQRLQSEWKMAK. A helical transmembrane segment spans residues 294-314; the sequence is VALIVILLFVLSWAPYSTVAL. Topologically, residues 315-355 are extracellular; the sequence is VGFAGYSHILTPYMSSVPAVIAKASAIHNPIIYAITHPKYR. N6-(retinylidene)lysine is present on Lys-337. The chain crosses the membrane as a helical span at residues 356 to 372; the sequence is AAIAQHLPCLGVLLGVS. Residues 373-474 lie on the Cytoplasmic side of the membrane; the sequence is GQRSHPSLSY…RHLPSLDRRM (102 aa). Residues 428–474 are disordered; that stretch reads AAQQASGQSFCSHDLEDGEVKAPSSPQEQKSKTPKTKRHLPSLDRRM.

It belongs to the G-protein coupled receptor 1 family. Opsin subfamily. Eye; expressed in a photosensitive subset of retinal ganglion cells (at protein level).

The protein resides in the cell membrane. It is found in the cell projection. It localises to the axon. Its subcellular location is the dendrite. The protein localises to the perikaryon. Its function is as follows. Photoreceptor that binds cis-retinaldehydes. Contributes to pupillar reflex, photoentrainment and other non-image forming responses to light. May be involved in the optokinetic visual tracking response. May be involved in the regulation of retinal hyaloid vessel growth and regression. This is Melanopsin from Rattus norvegicus (Rat).